The sequence spans 345 residues: Methionine import ATP-binding protein MetN (345 aa).

Positions 2 to 241 (IKLNNITKIF…PKTELAQEFI (240 aa)) constitute an ABC transporter domain. 38-45 (GASGAGKS) is an ATP binding site.

This sequence belongs to the ABC transporter superfamily. Methionine importer (TC 3.A.1.24) family. In terms of assembly, the complex is composed of two ATP-binding proteins (MetN), two transmembrane proteins (MetI) and a solute-binding protein (MetQ).

The protein resides in the cell inner membrane. The catalysed reaction is L-methionine(out) + ATP + H2O = L-methionine(in) + ADP + phosphate + H(+). The enzyme catalyses D-methionine(out) + ATP + H2O = D-methionine(in) + ADP + phosphate + H(+). Part of the ABC transporter complex MetNIQ involved in methionine import. Responsible for energy coupling to the transport system. The chain is Methionine import ATP-binding protein MetN from Haemophilus influenzae (strain 86-028NP).